Consider the following 231-residue polypeptide: Large ribosomal subunit protein uL1 (231 aa).

It belongs to the universal ribosomal protein uL1 family. Part of the 50S ribosomal subunit.

Functionally, binds directly to 23S rRNA. The L1 stalk is quite mobile in the ribosome, and is involved in E site tRNA release. Protein L1 is also a translational repressor protein, it controls the translation of the L11 operon by binding to its mRNA. The chain is Large ribosomal subunit protein uL1 from Moorella thermoacetica (strain ATCC 39073 / JCM 9320).